We begin with the raw amino-acid sequence, 497 residues long: Carboxylesterase (497 aa).

The active-site Acyl-ester intermediate is serine 185. Active-site charge relay system residues include glutamate 319 and histidine 415.

It belongs to the type-B carboxylesterase/lipase family.

It localises to the secreted. The enzyme catalyses a carboxylic ester + H2O = an alcohol + a carboxylate + H(+). This is Carboxylesterase from Thermobifida fusca (strain YX).